Here is a 180-residue protein sequence, read N- to C-terminus: Large ribosomal subunit protein uL5 (180 aa).

Belongs to the universal ribosomal protein uL5 family. As to quaternary structure, part of the 50S ribosomal subunit; part of the 5S rRNA/L5/L18/L25 subcomplex. Contacts the 5S rRNA and the P site tRNA. Forms a bridge to the 30S subunit in the 70S ribosome.

Its function is as follows. This is one of the proteins that bind and probably mediate the attachment of the 5S RNA into the large ribosomal subunit, where it forms part of the central protuberance. In the 70S ribosome it contacts protein S13 of the 30S subunit (bridge B1b), connecting the 2 subunits; this bridge is implicated in subunit movement. Contacts the P site tRNA; the 5S rRNA and some of its associated proteins might help stabilize positioning of ribosome-bound tRNAs. This is Large ribosomal subunit protein uL5 from Xanthomonas euvesicatoria pv. vesicatoria (strain 85-10) (Xanthomonas campestris pv. vesicatoria).